We begin with the raw amino-acid sequence, 289 residues long: ADP-dependent (S)-NAD(P)H-hydrate dehydratase (289 aa).

A YjeF C-terminal domain is found at 9-286 (VTAAALRAQP…PEVPGILDRL (278 aa)). (6S)-NADPHX-binding residues include Ala44 and His160. Residues 197 to 201 (KGADS) and Gly226 contribute to the AMP site. Asp227 lines the (6S)-NADPHX pocket.

This sequence belongs to the NnrD/CARKD family. Homotetramer. It depends on Mg(2+) as a cofactor.

It carries out the reaction (6S)-NADHX + ADP = AMP + phosphate + NADH + H(+). The enzyme catalyses (6S)-NADPHX + ADP = AMP + phosphate + NADPH + H(+). Its function is as follows. Catalyzes the dehydration of the S-form of NAD(P)HX at the expense of ADP, which is converted to AMP. Together with NAD(P)HX epimerase, which catalyzes the epimerization of the S- and R-forms, the enzyme allows the repair of both epimers of NAD(P)HX, a damaged form of NAD(P)H that is a result of enzymatic or heat-dependent hydration. The protein is ADP-dependent (S)-NAD(P)H-hydrate dehydratase of Xanthomonas campestris pv. campestris (strain ATCC 33913 / DSM 3586 / NCPPB 528 / LMG 568 / P 25).